The sequence spans 118 residues: DNA-binding protein inhibitor ID-3-A (118 aa).

In terms of domain architecture, bHLH spans 32–84 (SHKGPGMDEPMGLLYDMNGCYSKLKELVPGIPQGSKLSQVEILQHVIDYIFDL).

In terms of assembly, homodimer. Heterodimer with other HLH proteins. Interacts (via HLH domain) with the bHLH protein hes4/hairy2 (via Orange domain). Interacts with stat3. In terms of tissue distribution, at gastrula stage, expressed in all three germ layers, but becomes localized to discrete domains of the developing nervous system during neurulation, including the anterior neural plate, cement gland, eye anlagen, otic placode and both cranial and trunk premigratory and early migratory neural crest cells. Also expressed in the most dorsal and ventral portions of the myotome, the developing heart and anterior blood islets, and in the tail fin mesenchyme. Expressed at a low level in limbs, with expression decreasing as limbs develop, but expressed at a high level in blastemas (regenerated limbs), where expression is localized to both the blastermal epidermis and mesenchyme. Widely expressed in adults including the liver and heart.

It is found in the nucleus. Transcriptional regulator (lacking a basic DNA binding domain) which negatively regulates the basic helix-loop-helix (bHLH) transcription factors by forming heterodimers and inhibiting their DNA binding and transcriptional activity. Influences cell fate decisions in the embryo by sequestering and blocking the activity of the bHLH transcription factors that control these decisions. Inhibits the binding of myogenic bHLH-containing complexes to E-box DNA, thereby preventing activation of muscle-specific target genes. Also inhibits the activity of neurogenic factor neurod1/neuroD. Plays a role in cell cycle progression and survival of neural crest progenitors; binding to either hes4-B/hairy2b or stat3 blocks the formation of transcription factor complexes and the repressor function of hes4-B/hairy2B, to allow neural crest progenitors to differentiate. May play a role in the regulation of the circadian rhythm. This chain is DNA-binding protein inhibitor ID-3-A (id3-a), found in Xenopus laevis (African clawed frog).